Here is a 172-residue protein sequence, read N- to C-terminus: Lectin (172 aa).

The first 20 residues, 1-20 (MVWCLADLRAYVLVLLVISG), serve as a signal peptide directing secretion. In terms of domain architecture, C-type lectin spans 36–172 (DCTPGWDCHF…ICKYTTPCRY (137 aa)). 2 cysteine pairs are disulfide-bonded: cysteine 65/cysteine 164 and cysteine 140/cysteine 156. N-linked (GlcNAc...) asparagine glycosylation is present at asparagine 93.

In terms of assembly, heterodimer. In terms of tissue distribution, anterior part of oviduct.

The protein resides in the secreted. Its function is as follows. May be involved in protection of eggs and embryos against microorganisms. Calcium-dependent lectin with specificity to D-glucose and D-glucosamine. Can agglutinate microorganisms in vivo. The sequence is that of Lectin (LEC) from Pleurodeles waltl (Iberian ribbed newt).